The primary structure comprises 196 residues: tRNA(Phe) 7-((3-amino-3-carboxypropyl)-4-demethylwyosine(37)-N(4))-methyltransferase (196 aa).

This sequence belongs to the TYW3 family.

The enzyme catalyses 4-demethyl-7-[(3S)-3-amino-3-carboxypropyl]wyosine(37) in tRNA(Phe) + S-adenosyl-L-methionine = 7-[(3S)-3-amino-3-carboxypropyl]wyosine(37) in tRNA(Phe) + S-adenosyl-L-homocysteine + H(+). Its function is as follows. S-adenosyl-L-methionine-dependent methyltransferase that acts as a component of the wyosine derivatives biosynthesis pathway. Probably methylates N-4 position of wybutosine-86 to produce wybutosine-72. In Archaeoglobus fulgidus (strain ATCC 49558 / DSM 4304 / JCM 9628 / NBRC 100126 / VC-16), this protein is tRNA(Phe) 7-((3-amino-3-carboxypropyl)-4-demethylwyosine(37)-N(4))-methyltransferase.